Here is a 339-residue protein sequence, read N- to C-terminus: Chromo domain-containing protein cec-3 (339 aa).

The disordered stretch occupies residues 1–21 (MSNEGSREESREPEAREGKSD). One can recognise a Chromo domain in the interval 24–84 (FEVEKILAHK…KLKVTDKTEL (61 aa)). Residues 91 to 105 (QIKKNKSQKSKKRSK) are compositionally biased toward basic residues. 2 disordered regions span residues 91 to 199 (QIKK…APLS) and 215 to 272 (EEKA…QRTL). Composition is skewed to basic and acidic residues over residues 106–117 (TVSDHESNHDSD) and 171–183 (AAME…RNWL). A compositionally biased stretch (acidic residues) spans 184–193 (DEESSDDEAE). The segment covering 230 to 241 (KPREVVIKKDPS) has biased composition (basic and acidic residues). Residues 242 to 251 (ESPVASASSV) are compositionally biased toward low complexity.

In terms of tissue distribution, expressed in every cell of the embryo (at protein level). In adults, expressed predominantly in the head region and the germline.

The protein resides in the chromosome. The protein localises to the nucleus. Its function is as follows. Specifically recognizes and binds methylated 'Lys-9' of histone H3 (H3K9me), with highest preference for trimethylated 'Lys-9' (H3K9me3) followed by dimethylated 'Lys-9' (H3K9me2) followed by monomethylated 'Lys-9' (H3K9me1). Plays a role in maintaining correct unc-4 expression in the VC motor neurons where unc-4 is expressed in the vulval but not in the non-vulval VC neurons. In Caenorhabditis elegans, this protein is Chromo domain-containing protein cec-3 (cec-3).